Reading from the N-terminus, the 277-residue chain is Protein EURL homolog (277 aa).

Residues 173–201 (LGLWPGERPQNREQRDSRQRRHSGHSREE) form a disordered region. Residues 197-229 (HSREELMRKNVEELRQLNEQLLLQIQNVFEELS) are a coiled coil.

This sequence belongs to the EURL family.

Plays a role in cortical progenitor cell proliferation and differentiation. May promote dendritic spine development of post-migratory cortical projection neurons by modulating the beta-catenin signaling pathway. The sequence is that of Protein EURL homolog from Danio rerio (Zebrafish).